The following is a 386-amino-acid chain: MSALEKSMHLGRLPSRPPLPGSGGSQSGAKMRMGPGRKRDFSPVPWSQYFESMEDVEVENETGKDTFRVYKSGSEGPVLLLLHGGGHSALSWAVFTAAIISRVQCRIVALDLRSHGETKVKNPEDLSAETMAKDVGNVVEAMYGDLPPPIMLIGHSMGGAIAVHTASSNLVPSLLGLCMIDVVEGTAMDALNSMQNFLRGRPKTFKSLENAIEWSVKSGQIRNLESARVSMVGQVKQCEGITSPEGSKSIVEGIIEEEEEDEEGSESISKRKKEDDMETKKDHPYTWRIELAKTEKYWDGWFRGLSNLFLSCPIPKLLLLAGVDRLDKDLTIGQMQGKFQMQVLPQCGHAVHEDAPDKVAEAVATFLIRHRFAEPIGGFQCVFPGC.

The segment at 1–38 is disordered; it reads MSALEKSMHLGRLPSRPPLPGSGGSQSGAKMRMGPGRK. Position 15 is a phosphoserine (Ser15). Arg16 carries the post-translational modification Asymmetric dimethylarginine; alternate. Residue Arg16 is modified to Omega-N-methylarginine; alternate. At Ser42 the chain carries Phosphoserine. Active-site residues include Ser156 and Asp181. Over residues 254–265 the composition is skewed to acidic residues; the sequence is IIEEEEEDEEGS. Positions 254–280 are disordered; the sequence is IIEEEEEDEEGSESISKRKKEDDMETK. Over residues 268-280 the composition is skewed to basic and acidic residues; sequence ISKRKKEDDMETK. His349 is an active-site residue.

This sequence belongs to the AB hydrolase superfamily. As to quaternary structure, binds PPP2CA and PPP2CB. Phosphorylated by SIK1 following increases in intracellular sodium, leading to dissociation from the protein phosphatase 2A (PP2A) complex and subsequent dephosphorylation of sodium/potassium-transporting ATPase ATP1A1.

The enzyme catalyses [phosphatase 2A protein]-C-terminal L-leucine methyl ester + H2O = [phosphatase 2A protein]-C-terminal L-leucine + methanol + H(+). Functionally, demethylates proteins that have been reversibly carboxymethylated. Demethylates PPP2CB (in vitro) and PPP2CA. Binding to PPP2CA displaces the manganese ion and inactivates the enzyme. The sequence is that of Protein phosphatase methylesterase 1 (PPME1) from Homo sapiens (Human).